We begin with the raw amino-acid sequence, 276 residues long: Malectin-A (276 aa).

The N-terminal stretch at 1-26 is a signal peptide; the sequence is MLSIRTVLGPLATILLTVLGPFGAHG. Residues 27–253 are Lumenal-facing; it reads SGLADKVIWA…TPNPYASDNS (227 aa). Positions 67, 89, 116, 117, and 186 each coordinate a carbohydrate. Residues 204-247 form a disordered region; that stretch reads PMLQPHPGLEKKEEEEEEEEEEGSTSKKQINKNRVQSGPRTPNP. The segment covering 216 to 226 has biased composition (acidic residues); that stretch reads EEEEEEEEEEG. The segment covering 229 to 247 has biased composition (polar residues); that stretch reads SKKQINKNRVQSGPRTPNP. A glycan (N-linked (GlcNAc...) asparagine) is linked at N252. The helical transmembrane segment at 254–274 threads the bilayer; it reads SLMFPILVAFGVFIPTLFCLC. Over 275-276 the chain is Cytoplasmic; that stretch reads RL.

The protein belongs to the malectin family. As to expression, widely expressed throughout development including the anterior neuroectoderm and neural crest at stages 18 and 20, and the retina, hatching gland, otic vesicle, epibranchial placodes, pronephros and tail tip of later states. At stage 41, expressed in the liver, pancreas, branchial arches and proctodeum. Expressed broadly in adults in fat, intestine, gall bladder, eye, muscle, kidney, stomach, liver, heart, pancreas and lung.

Its subcellular location is the endoplasmic reticulum membrane. Carbohydrate-binding protein with a strong ligand preference for Glc2-N-glycan. May play a role in the early steps of protein N-glycosylation. Can bind di- or higher oligomers but not monomers of glucose, including maltose, maltotriose, maltotetraose, maltoheptaose, nigerose, kojibose, cellobiose and isomaltose, although based on their subcellular locations, these are unlikely to all be physiological ligands. This Xenopus laevis (African clawed frog) protein is Malectin-A.